Here is a 469-residue protein sequence, read N- to C-terminus: Glutamate--tRNA ligase (469 aa).

The short motif at 9–19 (PSPTGFLHVGG) is the 'HIGH' region element. Zn(2+) is bound by residues cysteine 98, cysteine 100, cysteine 125, and aspartate 127. Residues 236 to 240 (KLSKR) carry the 'KMSKS' region motif. ATP is bound at residue lysine 239.

This sequence belongs to the class-I aminoacyl-tRNA synthetase family. Glutamate--tRNA ligase type 1 subfamily. Monomer. It depends on Zn(2+) as a cofactor.

Its subcellular location is the cytoplasm. The catalysed reaction is tRNA(Glu) + L-glutamate + ATP = L-glutamyl-tRNA(Glu) + AMP + diphosphate. Functionally, catalyzes the attachment of glutamate to tRNA(Glu) in a two-step reaction: glutamate is first activated by ATP to form Glu-AMP and then transferred to the acceptor end of tRNA(Glu). This Shewanella loihica (strain ATCC BAA-1088 / PV-4) protein is Glutamate--tRNA ligase.